The following is a 664-amino-acid chain: Delta-like protein C (664 aa).

The signal sequence occupies residues Met1–Ser20. At Ser21 to Leu511 the chain is on the extracellular side. The DSL domain occupies Val154 to Cys198. 27 disulfides stabilise this stretch: Cys156–Cys165, Cys169–Cys181, Cys189–Cys198, Cys203–Cys214, Cys207–Cys220, Cys222–Cys231, Cys234–Cys245, Cys240–Cys251, Cys253–Cys262, Cys269–Cys281, Cys275–Cys291, Cys293–Cys302, Cys309–Cys320, Cys314–Cys329, Cys331–Cys340, Cys347–Cys358, Cys352–Cys368, Cys370–Cys379, Cys386–Cys397, Cys391–Cys406, Cys408–Cys417, Cys424–Cys435, Cys429–Cys444, Cys446–Cys455, Cys462–Cys473, Cys467–Cys482, and Cys484–Cys493. The N-linked (GlcNAc...) asparagine glycan is linked to Asn173. 3 consecutive EGF-like domains span residues Thr199 to Asp232, Glu233 to Asn263, and Asp265 to Glu303. The 37-residue stretch at Glu305 to Glu341 folds into the EGF-like 4; calcium-binding domain. 2 consecutive EGF-like domains span residues Ser343–Glu380 and Lys382–Glu418. In terms of domain architecture, EGF-like 7; calcium-binding spans Asn420 to Arg456. Positions Arg458 to Glu494 constitute an EGF-like 8 domain. Residues Ile512–Val532 traverse the membrane as a helical segment. The Cytoplasmic segment spans residues Leu533 to Val664.

In terms of processing, ubiquitinated by mib, leading to its endocytosis and subsequent degradation. As to expression, strongly expressed in the early retina, where it precedes other delta proteins. Also expressed in cranial ganglia, in sensory epithelia including ear and lateral line and in scattered epidermal cells. In the mesoderm, expression is visible by 50% epiboly; it is expressed subsequently in the tail bud, in stripes in the presomitic mesoderm and in the posterior half of each somite. Also expressed in notochord, blood vessels and pronephros. In contrast to other delta proteins, it is not expressed in the majority of nascent primary neurons. In somites, it marks the posterior part of each formed somite, while deltaD (dld) marks the anterior part.

The protein localises to the membrane. Its function is as follows. Acts as a ligand for Notch receptors and is involved in somitogenesis. Can activate Notch receptors. Required in somite segmentation to keep the oscillations of neighboring presomitic mesoderm cells synchronized. The polypeptide is Delta-like protein C (dlc) (Danio rerio (Zebrafish)).